A 117-amino-acid polypeptide reads, in one-letter code: Cell division protein FtsB (117 aa).

The Cytoplasmic portion of the chain corresponds to 1–6; the sequence is MRDWRW. Residues 7–24 traverse the membrane as a helical segment; it reads MLLVLALLLGWLQYRFWF. Over 25–117 the chain is Periplasmic; sequence GPGNSGEVMM…QVGDHPADVP (93 aa). Residues 29–69 adopt a coiled-coil conformation; that stretch reads SGEVMMLEAQVANQERDNEGLQQRNDALAAEVKDLKEGQSA.

It belongs to the FtsB family. As to quaternary structure, part of a complex composed of FtsB, FtsL and FtsQ.

The protein localises to the cell inner membrane. Essential cell division protein. May link together the upstream cell division proteins, which are predominantly cytoplasmic, with the downstream cell division proteins, which are predominantly periplasmic. In Stenotrophomonas maltophilia (strain K279a), this protein is Cell division protein FtsB.